We begin with the raw amino-acid sequence, 225 residues long: Octanoyltransferase (225 aa).

Residues 29–210 (PDTDDEIWVV…RLIAHLDGAT (182 aa)) form the BPL/LPL catalytic domain. Residues 69 to 76 (RGGQITYH), 141 to 143 (ALG), and 154 to 156 (GLS) contribute to the substrate site. The Acyl-thioester intermediate role is filled by Cys172.

The protein belongs to the LipB family.

It is found in the cytoplasm. It carries out the reaction octanoyl-[ACP] + L-lysyl-[protein] = N(6)-octanoyl-L-lysyl-[protein] + holo-[ACP] + H(+). It functions in the pathway protein modification; protein lipoylation via endogenous pathway; protein N(6)-(lipoyl)lysine from octanoyl-[acyl-carrier-protein]: step 1/2. In terms of biological role, catalyzes the transfer of endogenously produced octanoic acid from octanoyl-acyl-carrier-protein onto the lipoyl domains of lipoate-dependent enzymes. Lipoyl-ACP can also act as a substrate although octanoyl-ACP is likely to be the physiological substrate. The sequence is that of Octanoyltransferase from Burkholderia pseudomallei (strain K96243).